The following is a 423-amino-acid chain: Maltoporin 1 (423 aa).

The N-terminal stretch at 1-24 (MITLRKLPIALAVAAGVLSTQAMA) is a signal peptide.

The protein belongs to the porin LamB (TC 1.B.3) family. In terms of assembly, homotrimer formed of three 18-stranded antiparallel beta-barrels, containing three independent channels.

The protein resides in the cell outer membrane. It carries out the reaction beta-maltose(in) = beta-maltose(out). Its function is as follows. Involved in the transport of maltose and maltodextrins. The chain is Maltoporin 1 from Yersinia pestis bv. Antiqua (strain Antiqua).